We begin with the raw amino-acid sequence, 240 residues long: UDP-2,3-diacylglucosamine hydrolase (240 aa).

Positions 8, 10, 41, 79, and 114 each coordinate Mn(2+). A substrate-binding site is contributed by Asn-79–Arg-80. 5 residues coordinate substrate: Asp-122, Ser-160, Asn-164, Lys-167, and His-195. Mn(2+) is bound by residues His-195 and His-197.

This sequence belongs to the LpxH family. Mn(2+) serves as cofactor.

The protein resides in the cell inner membrane. It carries out the reaction UDP-2-N,3-O-bis[(3R)-3-hydroxytetradecanoyl]-alpha-D-glucosamine + H2O = 2-N,3-O-bis[(3R)-3-hydroxytetradecanoyl]-alpha-D-glucosaminyl 1-phosphate + UMP + 2 H(+). It functions in the pathway glycolipid biosynthesis; lipid IV(A) biosynthesis; lipid IV(A) from (3R)-3-hydroxytetradecanoyl-[acyl-carrier-protein] and UDP-N-acetyl-alpha-D-glucosamine: step 4/6. Its function is as follows. Hydrolyzes the pyrophosphate bond of UDP-2,3-diacylglucosamine to yield 2,3-diacylglucosamine 1-phosphate (lipid X) and UMP by catalyzing the attack of water at the alpha-P atom. Involved in the biosynthesis of lipid A, a phosphorylated glycolipid that anchors the lipopolysaccharide to the outer membrane of the cell. In Klebsiella pneumoniae subsp. pneumoniae (strain ATCC 700721 / MGH 78578), this protein is UDP-2,3-diacylglucosamine hydrolase.